The following is a 195-amino-acid chain: Probable GTP-binding protein EngB (195 aa).

The EngB-type G domain occupies E24 to L195. Residues G32–S39, G59–L63, D77–G80, T144–D147, and F176–S178 each bind GTP. Residues S39 and T61 each contribute to the Mg(2+) site.

This sequence belongs to the TRAFAC class TrmE-Era-EngA-EngB-Septin-like GTPase superfamily. EngB GTPase family. The cofactor is Mg(2+).

In terms of biological role, necessary for normal cell division and for the maintenance of normal septation. The polypeptide is Probable GTP-binding protein EngB (Streptococcus pneumoniae (strain Hungary19A-6)).